Consider the following 71-residue polypeptide: MPGLVNAPNHVPEKQRYYQQAFKNHTRLWKIGPRSGIIMTTFNIAMWGTFGASMYAMSRKVLGYNTWFSED.

Residues 1–35 (MPGLVNAPNHVPEKQRYYQQAFKNHTRLWKIGPRS) lie on the Mitochondrial matrix side of the membrane. A helical transmembrane segment spans residues 36-58 (GIIMTTFNIAMWGTFGASMYAMS). Residues 59-71 (RKVLGYNTWFSED) are Mitochondrial intermembrane-facing.

This sequence belongs to the cytochrome c oxidase VIIa family. In terms of assembly, component of the cytochrome c oxidase (complex IV, CIV), a multisubunit enzyme composed of 11 subunits. The complex is composed of a catalytic core of 3 subunits Cox1, Cox2 and Cox3, encoded in the mitochondrial DNA, and 8 supernumerary subunits Cox4, Cox5a/Cox5, Cox6, Cox7, Cox8, Cox7a/Cox9, Cox6b/Cox12 and Cox6a/Cox13, which are encoded in the nuclear genome. The complex exists as a monomer or a dimer and forms respiratory supercomplexes (SCs) in the inner mitochondrial membrane with NADH-ubiquinone oxidoreductase (complex I, CI) and ubiquinol-cytochrome c oxidoreductase (cytochrome b-c1 complex, complex III, CIII), resulting in various different assemblies (supercomplexes I(1)IV(1), I(1)III(3)IV(2), III(2)IV(1) and III(2)IV(2) as well as larger supercomplexes of compositions like I(1)III(2)IV(5-6)).

It localises to the mitochondrion inner membrane. It functions in the pathway energy metabolism; oxidative phosphorylation. Component of the cytochrome c oxidase, the last enzyme in the mitochondrial electron transport chain which drives oxidative phosphorylation. The respiratory chain contains 3 multisubunit complexes succinate dehydrogenase (complex II, CII), ubiquinol-cytochrome c oxidoreductase (cytochrome b-c1 complex, complex III, CIII) and cytochrome c oxidase (complex IV, CIV), that cooperate to transfer electrons derived from NADH and succinate to molecular oxygen, creating an electrochemical gradient over the inner membrane that drives transmembrane transport and the ATP synthase. Cytochrome c oxidase is the component of the respiratory chain that catalyzes the reduction of oxygen to water. Electrons originating from reduced cytochrome c in the intermembrane space (IMS) are transferred via the dinuclear copper A center (CU(A)) of Cox2 and heme A of Cox1 to the active site in Cox1, a binuclear center (BNC) formed by heme A3 and copper B (CU(B)). The BNC reduces molecular oxygen to 2 water molecules using 4 electrons from cytochrome c in the IMS and 4 protons from the mitochondrial matrix. The protein is Cytochrome c oxidase subunit 7, mitochondrial of Neurospora crassa (strain ATCC 24698 / 74-OR23-1A / CBS 708.71 / DSM 1257 / FGSC 987).